A 500-amino-acid chain; its full sequence is UPF0371 protein SZO_06760 (500 aa).

Belongs to the UPF0371 family.

This chain is UPF0371 protein SZO_06760, found in Streptococcus equi subsp. zooepidemicus (strain H70).